A 260-amino-acid polypeptide reads, in one-letter code: UPF0246 protein BceJ2315_22780 (260 aa).

It belongs to the UPF0246 family.

This is UPF0246 protein BceJ2315_22780 from Burkholderia cenocepacia (strain ATCC BAA-245 / DSM 16553 / LMG 16656 / NCTC 13227 / J2315 / CF5610) (Burkholderia cepacia (strain J2315)).